The chain runs to 904 residues: uncharacterized protein (904 aa).

Disordered regions lie at residues 247 to 275 (KIGK…SLEF) and 328 to 360 (GDSQ…HHFS). A compositionally biased stretch (polar residues) spans 342–360 (GAQTLSPTSHPSSANHHFS). Residues 778–798 (VVQGMILMFAGGKLIFGGRVL) form a helical membrane-spanning segment.

The protein localises to the membrane. This is an uncharacterized protein from Homo sapiens (Human).